Here is a 388-residue protein sequence, read N- to C-terminus: S-adenosylmethionine synthase (388 aa).

Histidine 16 is a binding site for ATP. Mg(2+) is bound at residue aspartate 18. Glutamate 44 serves as a coordination point for K(+). L-methionine-binding residues include glutamate 57 and glutamine 100. The interval 100 to 110 (QSPEIAQGVDR) is flexible loop. ATP-binding positions include 165–167 (DAK), 231–232 (KF), aspartate 240, 246–247 (RK), alanine 263, and lysine 267. Aspartate 240 is an L-methionine binding site. Lysine 271 contributes to the L-methionine binding site.

It belongs to the AdoMet synthase family. In terms of assembly, homotetramer; dimer of dimers. It depends on Mg(2+) as a cofactor. The cofactor is K(+).

The protein resides in the cytoplasm. It catalyses the reaction L-methionine + ATP + H2O = S-adenosyl-L-methionine + phosphate + diphosphate. It functions in the pathway amino-acid biosynthesis; S-adenosyl-L-methionine biosynthesis; S-adenosyl-L-methionine from L-methionine: step 1/1. Its function is as follows. Catalyzes the formation of S-adenosylmethionine (AdoMet) from methionine and ATP. The overall synthetic reaction is composed of two sequential steps, AdoMet formation and the subsequent tripolyphosphate hydrolysis which occurs prior to release of AdoMet from the enzyme. In Psychrobacter arcticus (strain DSM 17307 / VKM B-2377 / 273-4), this protein is S-adenosylmethionine synthase.